A 214-amino-acid chain; its full sequence is Glycerol-3-phosphate acyltransferase (214 aa).

Helical transmembrane passes span Leu-4–Ala-24, Ala-52–Val-72, Asp-82–Phe-102, Leu-118–Phe-138, and Phe-159–Trp-179.

The protein belongs to the PlsY family. In terms of assembly, probably interacts with PlsX.

The protein resides in the cell inner membrane. The enzyme catalyses an acyl phosphate + sn-glycerol 3-phosphate = a 1-acyl-sn-glycero-3-phosphate + phosphate. It participates in lipid metabolism; phospholipid metabolism. Functionally, catalyzes the transfer of an acyl group from acyl-phosphate (acyl-PO(4)) to glycerol-3-phosphate (G3P) to form lysophosphatidic acid (LPA). This enzyme utilizes acyl-phosphate as fatty acyl donor, but not acyl-CoA or acyl-ACP. The chain is Glycerol-3-phosphate acyltransferase from Paraburkholderia xenovorans (strain LB400).